The primary structure comprises 280 residues: Myb family transcription factor PHL11 (280 aa).

The 61-residue stretch at 20 to 80 (RDPKPRLRWT…HLQKYRLGQQ (61 aa)) folds into the HTH myb-type domain. The segment at residues 51–76 (PKSVLKLMGLKGLTLYHLKSHLQKYR) is a DNA-binding region (H-T-H motif). Positions 77-98 (LGQQQGKKQNRTEQNKENAGSS) are disordered. Positions 129–149 (AEAMRHQVDAQQRFQEQLEVQ) are coiled coil. Residues 142–147 (FQEQLE) carry the LHEQLE motif.

This sequence belongs to the MYB-CC family.

Its subcellular location is the nucleus. The chain is Myb family transcription factor PHL11 from Arabidopsis thaliana (Mouse-ear cress).